The following is a 969-amino-acid chain: MKIPFFILHILLLQFLLCLIRCYVHNDVIKFGEENSLKCSQGNLYVLHCEVQCLNGNNEIIHKRCNDDIEKKCNGNNKCIYFFEYELRKKTQSFRNKNSIEISECVESEQNEVKTSTTCLLSNSFILDEAFIQYFFFIKNKNEEPVICKDGNINIKSALLHSPFCEIKLKDISEYIRKKCDNNKECLIDPLDVQKNLLNEEDPCYINNSYVSVNVVCNKEEEIGDESTDSSSMEIQDSTSNEQDENVKGMSSSQEMNSNNDENKNQDNESDDDVNNNNNNNNDDQDEQGNDGDVTSSMNKNEDNKDLEHGSSNDVNNNTDTLVNNKENKEFVLKEKSSLTSKINKELAHRTALFNKLADNISLLLNKKYDSFEIKDVLEDRYNEMKRDANPDVYYIYLMDTLDIEKIEDINLEEVKMSLLASLKETMNKIDTIEKKIEEFKNKYISLYNKVKTTMPELFDLNEDLVLLYNDFPFDNGMISSDIFFKYNPSENIMDHQEMVKKGSITEDELRIVNDLEPLDNYRRRKRITELRKILVEKLRILYLEKNNLFNTQASCIKSYCYKNPLNLKTLEVLLKKNYYRLKENKDYDVVSSIIQHLDNVDANKKKKWLTHERILKKLQVLIAEGYKRINEKEKDIDRRMAVYNALYEKAQSYNLQKLFNDSNDFLKKYAIMGNSFDDGDEVFGSQSSNFNIFDSNNTDQNNEQEQPKQDDQLLNNNNDDVLSESNNENKEKTSDDATHKETQEKSDQEPSQNIQEDNSDEKHAENEENVEQIETDSNVSEEANDENKDNMQTTTDEGTEELQQNDEDAESLTKENSKSEEQENEDSTDAEAIDKEEVETEEKGKDEQKKDEQKEQDEEEDGEKENKHKSSETTNETVTDIEENKNEVKGEEHLQGSEQSIEASESSQKDETKETEDKEEYVNANDDESSEEDTTPNETNKTDNGSSFFFAMSNALLVILLLLFIEFL.

The N-terminal stretch at 1-22 is a signal peptide; sequence MKIPFFILHILLLQFLLCLIRC. An N-linked (GlcNAc...) asparagine glycan is attached at Asn-207. The segment at 223–328 is disordered; sequence IGDESTDSSS…TDTLVNNKEN (106 aa). The segment covering 229-241 has biased composition (polar residues); the sequence is DSSSMEIQDSTSN. Asn-268 carries an N-linked (GlcNAc...) asparagine glycan. A compositionally biased stretch (basic and acidic residues) spans 300-311; it reads KNEDNKDLEHGS. The span at 312–325 shows a compositional bias: low complexity; that stretch reads SNDVNNNTDTLVNN. Asn-317, Asn-360, Asn-661, and Asn-697 each carry an N-linked (GlcNAc...) asparagine glycan. A compositionally biased stretch (polar residues) spans 688 to 705; it reads SSNFNIFDSNNTDQNNEQ. Positions 688–947 are disordered; it reads SSNFNIFDSN…NETNKTDNGS (260 aa). Residues 713–727 are compositionally biased toward low complexity; it reads QLLNNNNDDVLSESN. Residues 728-749 are compositionally biased toward basic and acidic residues; the sequence is NENKEKTSDDATHKETQEKSDQ. The N-linked (GlcNAc...) asparagine glycan is linked to Asn-779. The span at 798-811 shows a compositional bias: acidic residues; it reads EGTEELQQNDEDAE. Over residues 812–822 the composition is skewed to basic and acidic residues; the sequence is SLTKENSKSEE. The span at 823-841 shows a compositional bias: acidic residues; sequence QENEDSTDAEAIDKEEVET. A compositionally biased stretch (basic and acidic residues) spans 842–854; sequence EEKGKDEQKKDEQ. The span at 855–864 shows a compositional bias: acidic residues; that stretch reads KEQDEEEDGE. N-linked (GlcNAc...) asparagine glycosylation is present at Asn-876. Basic and acidic residues predominate over residues 883–896; sequence EENKNEVKGEEHLQ. A compositionally biased stretch (low complexity) spans 897–907; sequence GSEQSIEASES. The span at 908–917 shows a compositional bias: basic and acidic residues; sequence SQKDETKETE. A compositionally biased stretch (acidic residues) spans 918–936; sequence DKEEYVNANDDESSEEDTT. Residues 937–947 show a composition bias toward polar residues; sequence PNETNKTDNGS. 3 N-linked (GlcNAc...) asparagine glycosylation sites follow: Asn-938, Asn-941, and Asn-945. Asn-945 is lipidated: GPI-anchor amidated asparagine. Positions 946 to 969 are cleaved as a propeptide — removed in mature form; sequence GSSFFFAMSNALLVILLLLFIEFL.

Forms a complex composed of RH5, P113 and human BSG/basigin; the complex bridges the merozoite and host erythrocyte membranes. Within the complex, interacts with RH5 (via N-terminus); the interaction tethers RH5 to the merozoite membrane.

Its subcellular location is the cell membrane. Functionally, membrane receptor which tethers secreted RH5 to the merozoite membrane during merozoite invasion of host erythocytes. In Plasmodium falciparum (isolate 3D7), this protein is Surface protein P113.